Consider the following 333-residue polypeptide: Adenosine deaminase (333 aa).

Zn(2+) is bound by residues H12 and H14. Substrate contacts are provided by H14, D16, and G170. H197 is a binding site for Zn(2+). The Proton donor role is filled by E200. D278 serves as a coordination point for Zn(2+). Substrate is bound at residue D279.

This sequence belongs to the metallo-dependent hydrolases superfamily. Adenosine and AMP deaminases family. Adenosine deaminase subfamily. It depends on Zn(2+) as a cofactor.

The enzyme catalyses adenosine + H2O + H(+) = inosine + NH4(+). It carries out the reaction 2'-deoxyadenosine + H2O + H(+) = 2'-deoxyinosine + NH4(+). In terms of biological role, catalyzes the hydrolytic deamination of adenosine and 2-deoxyadenosine. This Salmonella typhi protein is Adenosine deaminase.